The chain runs to 428 residues: Adenylosuccinate synthetase (428 aa).

Residues 12 to 18 (GDEGKGK) and 40 to 42 (GHT) each bind GTP. Residue Asp-13 is the Proton acceptor of the active site. Mg(2+) is bound by residues Asp-13 and Gly-40. IMP-binding positions include 13-16 (DEGK), 38-41 (NAGH), Thr-131, Arg-145, Gln-226, Thr-241, and Arg-305. The active-site Proton donor is the His-41. 301 to 307 (ATTGRKR) contacts substrate. GTP is bound by residues Arg-307, 333–335 (KLD), and 415–417 (SVG).

Belongs to the adenylosuccinate synthetase family. In terms of assembly, homodimer. Mg(2+) is required as a cofactor.

It localises to the cytoplasm. The enzyme catalyses IMP + L-aspartate + GTP = N(6)-(1,2-dicarboxyethyl)-AMP + GDP + phosphate + 2 H(+). It functions in the pathway purine metabolism; AMP biosynthesis via de novo pathway; AMP from IMP: step 1/2. Functionally, plays an important role in the de novo pathway of purine nucleotide biosynthesis. Catalyzes the first committed step in the biosynthesis of AMP from IMP. This chain is Adenylosuccinate synthetase, found in Nitratidesulfovibrio vulgaris (strain DSM 19637 / Miyazaki F) (Desulfovibrio vulgaris).